The following is a 271-amino-acid chain: Ribosomal RNA small subunit methyltransferase A (271 aa).

Residues N19, L21, G46, E67, D92, and N113 each coordinate S-adenosyl-L-methionine.

This sequence belongs to the class I-like SAM-binding methyltransferase superfamily. rRNA adenine N(6)-methyltransferase family. RsmA subfamily.

Its subcellular location is the cytoplasm. It catalyses the reaction adenosine(1518)/adenosine(1519) in 16S rRNA + 4 S-adenosyl-L-methionine = N(6)-dimethyladenosine(1518)/N(6)-dimethyladenosine(1519) in 16S rRNA + 4 S-adenosyl-L-homocysteine + 4 H(+). Specifically dimethylates two adjacent adenosines (A1518 and A1519) in the loop of a conserved hairpin near the 3'-end of 16S rRNA in the 30S particle. May play a critical role in biogenesis of 30S subunits. The sequence is that of Ribosomal RNA small subunit methyltransferase A from Photobacterium profundum (strain SS9).